We begin with the raw amino-acid sequence, 324 residues long: 4-hydroxy-3-methylbut-2-enyl diphosphate reductase (324 aa).

C28 is a [4Fe-4S] cluster binding site. 2 residues coordinate (2E)-4-hydroxy-3-methylbut-2-enyl diphosphate: H57 and H90. Dimethylallyl diphosphate contacts are provided by H57 and H90. H57 and H90 together coordinate isopentenyl diphosphate. C112 is a [4Fe-4S] cluster binding site. H140 is a binding site for (2E)-4-hydroxy-3-methylbut-2-enyl diphosphate. Position 140 (H140) interacts with dimethylallyl diphosphate. H140 contributes to the isopentenyl diphosphate binding site. The Proton donor role is filled by E142. T180 is a (2E)-4-hydroxy-3-methylbut-2-enyl diphosphate binding site. C210 provides a ligand contact to [4Fe-4S] cluster. The (2E)-4-hydroxy-3-methylbut-2-enyl diphosphate site is built by S238, S239, N240, and S282. 4 residues coordinate dimethylallyl diphosphate: S238, S239, N240, and S282. 4 residues coordinate isopentenyl diphosphate: S238, S239, N240, and S282.

The protein belongs to the IspH family. The cofactor is [4Fe-4S] cluster.

It carries out the reaction isopentenyl diphosphate + 2 oxidized [2Fe-2S]-[ferredoxin] + H2O = (2E)-4-hydroxy-3-methylbut-2-enyl diphosphate + 2 reduced [2Fe-2S]-[ferredoxin] + 2 H(+). The enzyme catalyses dimethylallyl diphosphate + 2 oxidized [2Fe-2S]-[ferredoxin] + H2O = (2E)-4-hydroxy-3-methylbut-2-enyl diphosphate + 2 reduced [2Fe-2S]-[ferredoxin] + 2 H(+). Its pathway is isoprenoid biosynthesis; dimethylallyl diphosphate biosynthesis; dimethylallyl diphosphate from (2E)-4-hydroxy-3-methylbutenyl diphosphate: step 1/1. It functions in the pathway isoprenoid biosynthesis; isopentenyl diphosphate biosynthesis via DXP pathway; isopentenyl diphosphate from 1-deoxy-D-xylulose 5-phosphate: step 6/6. Catalyzes the conversion of 1-hydroxy-2-methyl-2-(E)-butenyl 4-diphosphate (HMBPP) into a mixture of isopentenyl diphosphate (IPP) and dimethylallyl diphosphate (DMAPP). Acts in the terminal step of the DOXP/MEP pathway for isoprenoid precursor biosynthesis. This is 4-hydroxy-3-methylbut-2-enyl diphosphate reductase from Ralstonia nicotianae (strain ATCC BAA-1114 / GMI1000) (Ralstonia solanacearum).